Consider the following 552-residue polypeptide: Glutamate--tRNA ligase (552 aa).

Residues Pro102–His112 carry the 'HIGH' region motif.

It belongs to the class-I aminoacyl-tRNA synthetase family. Glutamate--tRNA ligase type 2 subfamily.

The protein localises to the cytoplasm. It carries out the reaction tRNA(Glu) + L-glutamate + ATP = L-glutamyl-tRNA(Glu) + AMP + diphosphate. In terms of biological role, catalyzes the attachment of glutamate to tRNA(Glu) in a two-step reaction: glutamate is first activated by ATP to form Glu-AMP and then transferred to the acceptor end of tRNA(Glu). The sequence is that of Glutamate--tRNA ligase from Methanothermobacter marburgensis (strain ATCC BAA-927 / DSM 2133 / JCM 14651 / NBRC 100331 / OCM 82 / Marburg) (Methanobacterium thermoautotrophicum).